The primary structure comprises 179 residues: Large ribosomal subunit protein uL5 (179 aa).

It belongs to the universal ribosomal protein uL5 family. In terms of assembly, part of the 50S ribosomal subunit; part of the 5S rRNA/L5/L18/L25 subcomplex. Contacts the 5S rRNA and the P site tRNA. Forms a bridge to the 30S subunit in the 70S ribosome.

This is one of the proteins that bind and probably mediate the attachment of the 5S RNA into the large ribosomal subunit, where it forms part of the central protuberance. In the 70S ribosome it contacts protein S13 of the 30S subunit (bridge B1b), connecting the 2 subunits; this bridge is implicated in subunit movement. Contacts the P site tRNA; the 5S rRNA and some of its associated proteins might help stabilize positioning of ribosome-bound tRNAs. This chain is Large ribosomal subunit protein uL5, found in Stutzerimonas stutzeri (strain A1501) (Pseudomonas stutzeri).